Consider the following 272-residue polypeptide: Urease accessory protein UreD (272 aa).

This sequence belongs to the UreD family. As to quaternary structure, ureD, UreF and UreG form a complex that acts as a GTP-hydrolysis-dependent molecular chaperone, activating the urease apoprotein by helping to assemble the nickel containing metallocenter of UreC. The UreE protein probably delivers the nickel.

Its subcellular location is the cytoplasm. Its function is as follows. Required for maturation of urease via the functional incorporation of the urease nickel metallocenter. In Opitutus terrae (strain DSM 11246 / JCM 15787 / PB90-1), this protein is Urease accessory protein UreD.